The sequence spans 352 residues: Spermidine/putrescine import ATP-binding protein PotA (352 aa).

The ABC transporter domain occupies 7–237 (IELKNVSKKY…PKNKFVANFI (231 aa)). 39 to 46 (GPSGCGKT) contributes to the ATP binding site.

It belongs to the ABC transporter superfamily. Spermidine/putrescine importer (TC 3.A.1.11.1) family. In terms of assembly, the complex is composed of two ATP-binding proteins (PotA), two transmembrane proteins (PotB and PotC) and a solute-binding protein (PotD).

The protein localises to the cell membrane. It catalyses the reaction ATP + H2O + polyamine-[polyamine-binding protein]Side 1 = ADP + phosphate + polyamineSide 2 + [polyamine-binding protein]Side 1.. In terms of biological role, part of the ABC transporter complex PotABCD involved in spermidine/putrescine import. Responsible for energy coupling to the transport system. This chain is Spermidine/putrescine import ATP-binding protein PotA, found in Clostridium acetobutylicum (strain ATCC 824 / DSM 792 / JCM 1419 / IAM 19013 / LMG 5710 / NBRC 13948 / NRRL B-527 / VKM B-1787 / 2291 / W).